A 484-amino-acid chain; its full sequence is Protein nucleotidyltransferase YdiU (484 aa).

Positions 81, 83, 84, 103, 115, 116, 166, and 173 each coordinate ATP. Aspartate 244 (proton acceptor) is an active-site residue. Positions 245 and 254 each coordinate Mg(2+). Residue aspartate 254 coordinates ATP.

Belongs to the SELO family. It depends on Mg(2+) as a cofactor. Mn(2+) is required as a cofactor.

The catalysed reaction is L-seryl-[protein] + ATP = 3-O-(5'-adenylyl)-L-seryl-[protein] + diphosphate. It catalyses the reaction L-threonyl-[protein] + ATP = 3-O-(5'-adenylyl)-L-threonyl-[protein] + diphosphate. The enzyme catalyses L-tyrosyl-[protein] + ATP = O-(5'-adenylyl)-L-tyrosyl-[protein] + diphosphate. It carries out the reaction L-histidyl-[protein] + UTP = N(tele)-(5'-uridylyl)-L-histidyl-[protein] + diphosphate. The catalysed reaction is L-seryl-[protein] + UTP = O-(5'-uridylyl)-L-seryl-[protein] + diphosphate. It catalyses the reaction L-tyrosyl-[protein] + UTP = O-(5'-uridylyl)-L-tyrosyl-[protein] + diphosphate. Functionally, nucleotidyltransferase involved in the post-translational modification of proteins. It can catalyze the addition of adenosine monophosphate (AMP) or uridine monophosphate (UMP) to a protein, resulting in modifications known as AMPylation and UMPylation. The sequence is that of Protein nucleotidyltransferase YdiU from Shewanella putrefaciens (strain CN-32 / ATCC BAA-453).